Consider the following 297-residue polypeptide: ER membrane protein complex subunit 2 (297 aa).

Ala2 bears the N-acetylalanine mark. TPR repeat units lie at residues 87–120 (HRVK…DPTN), 155–188 (QEAW…NPHN), and 192–225 (CQQY…NNRN). The residue at position 255 (Lys255) is an N6-acetyllysine.

The protein belongs to the EMC2 family. Component of the ER membrane protein complex (EMC). Interacts with WNK1 (via amphipathic alpha-helix region); promoting the ER membrane protein complex assembly by preventing EMC2 ubiquitination. Post-translationally, ubiquitinated when soluble in the cytoplasm, leading to its degradation by the proteasome. Interaction with EMC2 prevents its ubiquitination and degradation.

The protein localises to the endoplasmic reticulum membrane. Functionally, part of the endoplasmic reticulum membrane protein complex (EMC) that enables the energy-independent insertion into endoplasmic reticulum membranes of newly synthesized membrane proteins. Preferentially accommodates proteins with transmembrane domains that are weakly hydrophobic or contain destabilizing features such as charged and aromatic residues. Involved in the cotranslational insertion of multi-pass membrane proteins in which stop-transfer membrane-anchor sequences become ER membrane spanning helices. It is also required for the post-translational insertion of tail-anchored/TA proteins in endoplasmic reticulum membranes. By mediating the proper cotranslational insertion of N-terminal transmembrane domains in an N-exo topology, with translocated N-terminus in the lumen of the ER, controls the topology of multi-pass membrane proteins like the G protein-coupled receptors. By regulating the insertion of various proteins in membranes, it is indirectly involved in many cellular processes. The protein is ER membrane protein complex subunit 2 of Pongo abelii (Sumatran orangutan).